Reading from the N-terminus, the 100-residue chain is Urease subunit gamma (100 aa).

Belongs to the urease gamma subunit family. In terms of assembly, heterotrimer of UreA (gamma), UreB (beta) and UreC (alpha) subunits. Three heterotrimers associate to form the active enzyme.

It localises to the cytoplasm. It catalyses the reaction urea + 2 H2O + H(+) = hydrogencarbonate + 2 NH4(+). It functions in the pathway nitrogen metabolism; urea degradation; CO(2) and NH(3) from urea (urease route): step 1/1. This is Urease subunit gamma from Stutzerimonas stutzeri (strain A1501) (Pseudomonas stutzeri).